Reading from the N-terminus, the 429-residue chain is Histidine--tRNA ligase (429 aa).

Belongs to the class-II aminoacyl-tRNA synthetase family. As to quaternary structure, homodimer.

The protein resides in the cytoplasm. It carries out the reaction tRNA(His) + L-histidine + ATP = L-histidyl-tRNA(His) + AMP + diphosphate + H(+). The chain is Histidine--tRNA ligase from Alkalilimnicola ehrlichii (strain ATCC BAA-1101 / DSM 17681 / MLHE-1).